The following is a 186-amino-acid chain: UPF0301 protein PM1869 (186 aa).

It belongs to the UPF0301 (AlgH) family.

The protein is UPF0301 protein PM1869 of Pasteurella multocida (strain Pm70).